A 550-amino-acid polypeptide reads, in one-letter code: Iduronate 2-sulfatase (550 aa).

The N-terminal stretch at 1 to 25 (MPPPRTGRGLLWLGLVLSSVCVALG) is a signal peptide. The propeptide occupies 26–33 (SETQANST). Positions 45, 46, and 84 each coordinate Ca(2+). Catalysis depends on Cys-84, which acts as the Nucleophile. A 3-oxoalanine (Cys) modification is found at Cys-84. N-linked (GlcNAc...) asparagine glycosylation occurs at Asn-115. Residue His-138 is part of the active site. An N-linked (GlcNAc...) asparagine glycan is attached at Asn-144. A disulfide bridge connects residues Cys-171 and Cys-184. 3 N-linked (GlcNAc...) asparagine glycosylation sites follow: Asn-246, Asn-280, and Asn-325. 2 residues coordinate Ca(2+): Asp-334 and His-335. Cys-422 and Cys-432 form a disulfide bridge. Asn-513 and Asn-537 each carry an N-linked (GlcNAc...) asparagine glycan.

Belongs to the sulfatase family. Monomer. The 58-kDa mature form is composed of two chains resulting from proteolitic processing, the 42-kDa chain and the 14-kDa chain that remain stably associated and form the 58-kDa intermediate form which is enzymatically active. Ca(2+) serves as cofactor. In terms of processing, synthesized as a 75-kDa precursor form in the endoplasmic reticulum (ER), and then processed by proteolytic cleavage through various intermediates to yield a 55-kDa mature form, with the release of an 18 kDa polypeptide. Post-translationally, the conversion to 3-oxoalanine (also known as C-formylglycine, FGly), of a serine or cysteine residue in prokaryotes and of a cysteine residue in eukaryotes, is critical for catalytic activity. In terms of tissue distribution, liver, kidney, lung, and placenta.

It localises to the lysosome. The enzyme catalyses Hydrolysis of the 2-sulfate groups of the L-iduronate 2-sulfate units of dermatan sulfate, heparan sulfate and heparin.. Functionally, lysosomal enzyme involved in the degradation pathway of dermatan sulfate and heparan sulfate. This is Iduronate 2-sulfatase (IDS) from Homo sapiens (Human).